Here is a 1350-residue protein sequence, read N- to C-terminus: ABC transporter G family member 45 (1350 aa).

Residues 1-23 (MAAAVELTGDGGTTAETRWLSPP) are disordered. The region spanning 85 to 357 (AACAHMCTTR…FETMGFKCPS (273 aa)) is the ABC transporter 1 domain. 118-125 (GAPGSGKT) provides a ligand contact to ATP. Residues 434-647 (NIFKACFSRE…AQNAVALNEF (214 aa)) enclose the ABC transmembrane type-2 1 domain. 6 helical membrane passes run 453–473 (VHIF…TLFL), 491–511 (ALFM…AMTI), 523–543 (ILAL…LPIS), 557–577 (VIGY…LFAM), 597–617 (MANM…GFVI), and 683–703 (ICVS…IFAL). Residues 749–1001 (LVFDHINYFV…NMIKYFEAIP (253 aa)) form the ABC transporter 2 domain. Residue 794-801 (GITGAGKT) participates in ATP binding. The ABC transmembrane type-2 2 domain maps to 1074–1288 (AQCMACLWKQ…TVYGLMFSQL (215 aa)). The next 7 helical transmembrane spans lie at 1099–1119 (INTF…GSTI), 1126–1146 (FNIL…NCSI), 1181–1201 (LPYM…MIGF), 1208–1228 (FFWF…YGMM), 1238–1258 (IAAG…GFII), 1269–1289 (WVYW…SQLG), and 1322–1342 (LVTS…FLSI).

It belongs to the ABC transporter superfamily. ABCG family. PDR (TC 3.A.1.205) subfamily.

It is found in the membrane. Functionally, may be a general defense protein. The protein is ABC transporter G family member 45 of Oryza sativa subsp. japonica (Rice).